We begin with the raw amino-acid sequence, 417 residues long: UDP-N-acetylglucosamine 1-carboxyvinyltransferase 2 (417 aa).

A phosphoenolpyruvate-binding site is contributed by 22–23 (KN). UDP-N-acetyl-alpha-D-glucosamine is bound at residue arginine 94. The active-site Proton donor is the cysteine 118. Cysteine 118 is modified (2-(S-cysteinyl)pyruvic acid O-phosphothioketal). UDP-N-acetyl-alpha-D-glucosamine-binding positions include 123 to 127 (RPIDL), aspartate 306, and isoleucine 328.

It belongs to the EPSP synthase family. MurA subfamily.

The protein localises to the cytoplasm. The enzyme catalyses phosphoenolpyruvate + UDP-N-acetyl-alpha-D-glucosamine = UDP-N-acetyl-3-O-(1-carboxyvinyl)-alpha-D-glucosamine + phosphate. It functions in the pathway cell wall biogenesis; peptidoglycan biosynthesis. Cell wall formation. Adds enolpyruvyl to UDP-N-acetylglucosamine. This Clostridium tetani (strain Massachusetts / E88) protein is UDP-N-acetylglucosamine 1-carboxyvinyltransferase 2.